The chain runs to 814 residues: E3 ubiquitin-protein ligase TRIM71 (814 aa).

An RING-type zinc finger spans residues 12–76 (CPLCKEMCVS…SLQLRCPVCD (65 aa)). Positions 111–146 (QQQSNGGRTASNRQRSASCSSSGLLRRAPPSQSEPR) are disordered. A compositionally biased stretch (low complexity) spans 120 to 138 (ASNRQRSASCSSSGLLRRA). The B box-type 1; atypical zinc-finger motif lies at 142–189 (QSEPRCSSCDDGNGASSHCLDCQENLCDNCLRAHQRVRLTKDHFIERF). Zn(2+) is bound by residues C147, C150, C171, H175, C224, H227, C247, and H252. The B box-type 2 zinc finger occupies 219–260 (PERLYCQQHDEEVLHFYCDSCSVPICRECTMGRHAGHSFVYL). A coiled-coil region spans residues 282-370 (RQAIQLSLEQ…INAVQQVLEE (89 aa)). The Filamin repeat unit spans residues 425 to 526 (SSGAFAALTK…IENSPFKVNV (102 aa)). NHL repeat units lie at residues 539-582 (TLSF…FKPC), 586-629 (HHKF…FTFE), 633-676 (LLKF…FGPD), 680-723 (LNKY…IKPD), 727-770 (AHFL…FEPN), and 774-814 (LCKF…ILAF).

Belongs to the TRIM/RBCC family.

Its subcellular location is the cytoplasm. It localises to the P-body. It carries out the reaction S-ubiquitinyl-[E2 ubiquitin-conjugating enzyme]-L-cysteine + [acceptor protein]-L-lysine = [E2 ubiquitin-conjugating enzyme]-L-cysteine + N(6)-ubiquitinyl-[acceptor protein]-L-lysine.. It participates in protein modification; protein ubiquitination. In terms of biological role, E3 ubiquitin-protein ligase that cooperates with the microRNAs (miRNAs) machinery and promotes embryonic stem cells proliferation and maintenance. Binds to miRNAs and participates in post-transcriptional repression of transcripts. Required to maintain proliferation and prevent premature differentiation of neural progenitor cells during early neural development. This Xenopus tropicalis (Western clawed frog) protein is E3 ubiquitin-protein ligase TRIM71 (trim71).